Consider the following 649-residue polypeptide: 2-hydroxyacyl-CoA lyase 2 (649 aa).

The helical transmembrane segment at phenylalanine 2 to isoleucine 21 threads the bilayer. Glutamate 84 contributes to the thiamine diphosphate binding site. The thiamine pyrophosphate binding stretch occupies residues aspartate 474–cysteine 554. Mg(2+)-binding residues include aspartate 525 and asparagine 551.

The protein belongs to the TPP enzyme family. The cofactor is Mg(2+). Requires thiamine diphosphate as cofactor.

The protein localises to the endoplasmic reticulum membrane. The catalysed reaction is 2-hydroxyoctadecanoyl-CoA = heptadecanal + formyl-CoA. It catalyses the reaction (2R)-hydroxyhexadecanoyl-CoA = pentadecanal + formyl-CoA. Its function is as follows. Endoplasmic reticulum 2-OH acyl-CoA lyase involved in the cleavage (C1 removal) reaction in the fatty acid alpha-oxydation in a thiamine pyrophosphate (TPP)-dependent manner. Involved in the phytosphingosine degradation pathway. The protein is 2-hydroxyacyl-CoA lyase 2 (ilvbl) of Xenopus laevis (African clawed frog).